We begin with the raw amino-acid sequence, 322 residues long: 4-hydroxy-3-methylbut-2-enyl diphosphate reductase 1 (322 aa).

Cys-18 is a [4Fe-4S] cluster binding site. 2 residues coordinate (2E)-4-hydroxy-3-methylbut-2-enyl diphosphate: His-47 and His-82. Residues His-47 and His-82 each coordinate dimethylallyl diphosphate. 2 residues coordinate isopentenyl diphosphate: His-47 and His-82. Residue Cys-104 coordinates [4Fe-4S] cluster. (2E)-4-hydroxy-3-methylbut-2-enyl diphosphate is bound at residue His-132. His-132 serves as a coordination point for dimethylallyl diphosphate. Residue His-132 participates in isopentenyl diphosphate binding. The active-site Proton donor is the Glu-134. Thr-173 lines the (2E)-4-hydroxy-3-methylbut-2-enyl diphosphate pocket. Position 203 (Cys-203) interacts with [4Fe-4S] cluster. Residues Ser-231, Ser-232, Asn-233, and Ser-276 each contribute to the (2E)-4-hydroxy-3-methylbut-2-enyl diphosphate site. Residues Ser-231, Ser-232, Asn-233, and Ser-276 each coordinate dimethylallyl diphosphate. Isopentenyl diphosphate-binding residues include Ser-231, Ser-232, Asn-233, and Ser-276.

Belongs to the IspH family. [4Fe-4S] cluster serves as cofactor.

It carries out the reaction isopentenyl diphosphate + 2 oxidized [2Fe-2S]-[ferredoxin] + H2O = (2E)-4-hydroxy-3-methylbut-2-enyl diphosphate + 2 reduced [2Fe-2S]-[ferredoxin] + 2 H(+). The enzyme catalyses dimethylallyl diphosphate + 2 oxidized [2Fe-2S]-[ferredoxin] + H2O = (2E)-4-hydroxy-3-methylbut-2-enyl diphosphate + 2 reduced [2Fe-2S]-[ferredoxin] + 2 H(+). The protein operates within isoprenoid biosynthesis; dimethylallyl diphosphate biosynthesis; dimethylallyl diphosphate from (2E)-4-hydroxy-3-methylbutenyl diphosphate: step 1/1. It participates in isoprenoid biosynthesis; isopentenyl diphosphate biosynthesis via DXP pathway; isopentenyl diphosphate from 1-deoxy-D-xylulose 5-phosphate: step 6/6. Its function is as follows. Catalyzes the conversion of 1-hydroxy-2-methyl-2-(E)-butenyl 4-diphosphate (HMBPP) into a mixture of isopentenyl diphosphate (IPP) and dimethylallyl diphosphate (DMAPP). Acts in the terminal step of the DOXP/MEP pathway for isoprenoid precursor biosynthesis. The chain is 4-hydroxy-3-methylbut-2-enyl diphosphate reductase 1 from Bradyrhizobium diazoefficiens (strain JCM 10833 / BCRC 13528 / IAM 13628 / NBRC 14792 / USDA 110).